The chain runs to 625 residues: E3 ubiquitin-protein ligase synoviolin (625 aa).

Over 1–4 (MVRA) the chain is Cytoplasmic. The helical transmembrane segment at 5–25 (ALVTATSLALTGAVVAHAYFL) threads the bilayer. Residues 26-40 (KHQFYPTVVYLTKSS) lie on the Lumenal side of the membrane. Residues 41 to 61 (PSMAVLYIQAFVLVFLLGKLM) form a helical membrane-spanning segment. The Cytoplasmic portion of the chain corresponds to 62-98 (RKVFFGQLRAAEMEHLIERSWYAVTETCLAFTVFRDD). A helical transmembrane segment spans residues 99-119 (FSPRFVALFTLLLFLKCFHWL). At 120–135 (AEDRVDFMERSPNISW) the chain is on the lumenal side. The helical transmembrane segment at 136 to 156 (VFHFRVLSLMVLLGVMDFLFV) threads the bilayer. Topologically, residues 157–169 (NHACHSIITRGAS) are cytoplasmic. Residues 170 to 190 (VQLVFGFEYAILMTMVLTTFI) form a helical membrane-spanning segment. Residues 191-212 (KYTLHTIDLQSENPWDNKAVYM) lie on the Lumenal side of the membrane. A helical membrane pass occupies residues 213–235 (LYTELFTGFIKVLLYMAFMTIMI). Residues 236–270 (KVHTFPLFAIRPMYLAMRQFKKAVTDAIMSRRAIR) form an interaction with p53/TP53 region. Residues 236-625 (KVHTFPLFAI…GNLLKLASVN (390 aa)) are Cytoplasmic-facing. Zn(2+) is bound by residues C291, C294, C307, H309, H312, C315, C326, and C329. An RING-type; atypical zinc finger spans residues 291–330 (CIICREEMVTGAKKLPCNHIFHSSCLRSWFQRQQTCPTCR). Disordered regions lie at residues 337–361 (SQPN…NAPI), 390–434 (PPPA…SAAP), 462–487 (FMSS…LEQE), and 523–625 (LSPP…ASVN). The span at 342 to 361 (TPAPPAAQAPAPPAPANAPI) shows a compositional bias: pro residues. A compositionally biased stretch (low complexity) spans 423–434 (AQSTAEAASAAP). The span at 462–471 (FMSSMPPPPS) shows a compositional bias: pro residues. The segment covering 523–564 (LSPPRSETNTGETSESANVESSPSTANTETAGQEIQSQSGES) has biased composition (polar residues).

The protein belongs to the HRD1 family. Homodimer.

The protein localises to the endoplasmic reticulum membrane. The catalysed reaction is S-ubiquitinyl-[E2 ubiquitin-conjugating enzyme]-L-cysteine + [acceptor protein]-L-lysine = [E2 ubiquitin-conjugating enzyme]-L-cysteine + N(6)-ubiquitinyl-[acceptor protein]-L-lysine.. Its pathway is protein modification; protein ubiquitination. E3 ubiquitin-protein ligase which accepts ubiquitin specifically from endoplasmic reticulum-associated UBC7 E2 ligase and transfers it to substrates, promoting their degradation. Component of the endoplasmic reticulum quality control (ERQC) system also called ER-associated degradation (ERAD) involved in ubiquitin-dependent degradation of misfolded endoplasmic reticulum proteins. Also promotes the degradation of normal but naturally short-lived proteins. Protects cells from ER stress-induced apoptosis. Sequesters p53 in the cytoplasm and promotes its degradation, thereby negatively regulating its biological function in transcription, cell cycle regulation and apoptosis. The sequence is that of E3 ubiquitin-protein ligase synoviolin (syvn1) from Danio rerio (Zebrafish).